The primary structure comprises 376 residues: Protein-glutamate methylesterase/protein-glutamine glutaminase 1 (376 aa).

In terms of domain architecture, Response regulatory spans 4–121; the sequence is KVLVVDDSSF…ARNRDEAVSL (118 aa). Asp-55 carries the post-translational modification 4-aspartylphosphate. The disordered stretch occupies residues 138-174; the sequence is RPVASSTPVQERPQSTLNRPTTGLRREAPAQAPVSRA. Residues 141-158 show a composition bias toward polar residues; sequence ASSTPVQERPQSTLNRPT. The 194-residue stretch at 183-376 folds into the CheB-type methylesterase domain; it reads SGKKYQLTAI…ERMLVEVGLA (194 aa). Catalysis depends on residues Ser-195, His-222, and Asp-318.

The protein belongs to the CheB family. Post-translationally, phosphorylated by CheA. Phosphorylation of the N-terminal regulatory domain activates the methylesterase activity.

The protein localises to the cytoplasm. It carries out the reaction [protein]-L-glutamate 5-O-methyl ester + H2O = L-glutamyl-[protein] + methanol + H(+). The enzyme catalyses L-glutaminyl-[protein] + H2O = L-glutamyl-[protein] + NH4(+). Functionally, involved in chemotaxis. Part of a chemotaxis signal transduction system that modulates chemotaxis in response to various stimuli. Catalyzes the demethylation of specific methylglutamate residues introduced into the chemoreceptors (methyl-accepting chemotaxis proteins or MCP) by CheR. Also mediates the irreversible deamidation of specific glutamine residues to glutamic acid. In Vibrio vulnificus (strain CMCP6), this protein is Protein-glutamate methylesterase/protein-glutamine glutaminase 1.